The chain runs to 185 residues: Elongation factor P (185 aa).

It belongs to the elongation factor P family.

It is found in the cytoplasm. Its pathway is protein biosynthesis; polypeptide chain elongation. Involved in peptide bond synthesis. Stimulates efficient translation and peptide-bond synthesis on native or reconstituted 70S ribosomes in vitro. Probably functions indirectly by altering the affinity of the ribosome for aminoacyl-tRNA, thus increasing their reactivity as acceptors for peptidyl transferase. This Bacillus licheniformis (strain ATCC 14580 / DSM 13 / JCM 2505 / CCUG 7422 / NBRC 12200 / NCIMB 9375 / NCTC 10341 / NRRL NRS-1264 / Gibson 46) protein is Elongation factor P.